Reading from the N-terminus, the 134-residue chain is Small ribosomal subunit protein bS6 (134 aa).

Residues 103 to 134 (AAPVKSAEEGTEEVAAEAATEAPAETTTTVEG) form a disordered region. The span at 118–134 (AEAATEAPAETTTTVEG) shows a compositional bias: low complexity.

Belongs to the bacterial ribosomal protein bS6 family.

Binds together with bS18 to 16S ribosomal RNA. The polypeptide is Small ribosomal subunit protein bS6 (Citrifermentans bemidjiense (strain ATCC BAA-1014 / DSM 16622 / JCM 12645 / Bem) (Geobacter bemidjiensis)).